The primary structure comprises 797 residues: MGPAMFMAFRLWNWLLLLAVLTRSEATSYVNESSNPTAQQAPDARFAASSSDPDEGISVFELDYDYVQIPYEVTLWILLASLAKIGFHLYHRLPHLMPESCLLIIVGALVGGIIFGTHHKSPPVMDSSIYFLYLLPPIVLESGYFMPTRPFFENIGSILWWAGLGALINAFGIGLSLYFICQIKAFGLGDINLLHNLLFGSLISAVDPVAVLAVFEEARVNEQLYMMIFGEALLNDGISVVLYNILIAFTKMHKFEDIEAVDILAGCARFVIVGCGGVFFGIIFGFISAFITRFTQNISAIEPLIVFMFSYLSYLAAETLYLSGILAITACAVTMKKYVEENVSQTSYTTIKYFMKMLSSVSETLIFIFMGVSTIGKNHEWNWAFICFTLLFCQIWRAISVFTLFYVSNQFRTFPFSIKDQFIIFYSGVRGAGSFSLAFLLPLSLFPRKKLFVTATLVVTYFTVFFQGITIGPLVRYLDVRKTNKKESINEELHSRLMDHLKAGIEDVCGQWSHYQVRDKFKKFDHRYLRKILIRRNLPKSSIVSLYKKLEMKQAIEMVETGILSSVASPTPYQSERIQGIKRLSPEDVESMRDILTRSMYQVRQRTLSYNKYNLKPQTSEKQAKEILIRRQNTLRESMRKGQSLPWGKPAGTKNFRYLSFPYSNPQAARREARAAEPTDDDGTDSGFQPLMFSIHSRAGSLQERRQTQAVIPMKRLQRGEKALSFSYRSNTSWEDQAGWRRMDVLRPKPLFYAVAEEYDSGEQTEEETSAILSRWTAEHRHSTEHHKSHSPLLHRK.

Over 1 to 13 (MGPAMFMAFRLWN) the chain is Cytoplasmic. An intramembrane region (name=A/M1) is located at residues 14-28 (WLLLLAVLTRSEATS). The Cytoplasmic portion of the chain corresponds to 29–69 (YVNESSNPTAQQAPDARFAASSSDPDEGISVFELDYDYVQI). The segment at 32 to 52 (ESSNPTAQQAPDARFAASSSD) is disordered. The name=B/M2 intramembrane region spans 70-90 (PYEVTLWILLASLAKIGFHLY). Residues 91-94 (HRLP) lie on the Cytoplasmic side of the membrane. A helical membrane pass occupies residues 95–114 (HLMPESCLLIIVGALVGGII). The Extracellular portion of the chain corresponds to 115 to 127 (FGTHHKSPPVMDS). Residues 128 to 148 (SIYFLYLLPPIVLESGYFMPT) traverse the membrane as a helical segment. Residues 149 to 154 (RPFFEN) lie on the Cytoplasmic side of the membrane. Residues 155–175 (IGSILWWAGLGALINAFGIGL) traverse the membrane as a helical segment. The Extracellular segment spans residues 176–194 (SLYFICQIKAFGLGDINLL). A helical transmembrane segment spans residues 195–215 (HNLLFGSLISAVDPVAVLAVF). At 216–226 (EEARVNEQLYM) the chain is on the cytoplasmic side. Residues 227–247 (MIFGEALLNDGISVVLYNILI) traverse the membrane as a helical segment. Residues 248-270 (AFTKMHKFEDIEAVDILAGCARF) lie on the Extracellular side of the membrane. Residues 271–291 (VIVGCGGVFFGIIFGFISAFI) form a helical membrane-spanning segment. At 292–304 (TRFTQNISAIEPL) the chain is on the cytoplasmic side. A helical membrane pass occupies residues 305-325 (IVFMFSYLSYLAAETLYLSGI). Topologically, residues 326-352 (LAITACAVTMKKYVEENVSQTSYTTIK) are extracellular. The N-linked (GlcNAc...) asparagine glycan is linked to Asn342. A helical transmembrane segment spans residues 353–373 (YFMKMLSSVSETLIFIFMGVS). Over 374 to 384 (TIGKNHEWNWA) the chain is Cytoplasmic. A helical transmembrane segment spans residues 385 to 405 (FICFTLLFCQIWRAISVFTLF). Topologically, residues 406 to 420 (YVSNQFRTFPFSIKD) are extracellular. The name=L intramembrane region spans 421 to 441 (QFIIFYSGVRGAGSFSLAFLL). Topologically, residues 442–450 (PLSLFPRKK) are extracellular. The chain crosses the membrane as a helical span at residues 451 to 471 (LFVTATLVVTYFTVFFQGITI). The Cytoplasmic portion of the chain corresponds to 472–797 (GPLVRYLDVR…KSHSPLLHRK (326 aa)). The span at 759–769 (YDSGEQTEEET) shows a compositional bias: acidic residues. The segment at 759 to 797 (YDSGEQTEEETSAILSRWTAEHRHSTEHHKSHSPLLHRK) is disordered. The segment covering 783–797 (STEHHKSHSPLLHRK) has biased composition (basic residues).

This sequence belongs to the monovalent cation:proton antiporter 1 (CPA1) transporter (TC 2.A.36) family. As to quaternary structure, homodimer; each protomer has one site for sodium and one site for proton binding. Interacts with CHP1 and CHP2. In terms of processing, may be phosphorylated. As to expression, expressed in kidney. Expressed in uterus and endometrial epithelial cells. Expressed in the inner segments of inner medullary collecting ducts (IMCD) in kidney. Expressed in AGTR1-positive neurons in organum vasculosum of the lamina terminalis (at protein level).

Its subcellular location is the basolateral cell membrane. The protein resides in the apical cell membrane. It localises to the zymogen granule membrane. The catalysed reaction is Na(+)(in) + H(+)(out) = Na(+)(out) + H(+)(in). The enzyme catalyses Na(+)(out) + NH4(+)(in) = Na(+)(in) + NH4(+)(out). Its activity is regulated as follows. Up-regulated in response to high extracellular sodium concentration. Functionally, electroneutral antiporter that exchanges sodium for protons or ammonium ions at the basolateral membrane of epithelia to regulate cell volume and intracellular pH upon hypertonic conditions. As part of transcellular ammonia transport in renal tubules, mediates basolateral ammonium extrusion in the medullary thick ascending limb, regulating the corticopapillary ammonium gradient and overall renal acid excretion. Mediates sodium:proton exchange in gastric parietal cells secondary to cAMP-dependent acid secretion and hyperosmolarity. Possibly coupled to chloride:bicarbonate antiporter, enables loading of parietal cells with sodium and chloride ions to maintain cell volume and normal gastric acid secretion. Functions as a sodium sensor in neurons of organum vasculosum of the lamina terminalis where it regulates water intake in response to increased sodium concentration in body fluids. The polypeptide is Sodium/hydrogen exchanger 4 (Slc9a4) (Mus musculus (Mouse)).